A 142-amino-acid polypeptide reads, in one-letter code: Small ribosomal subunit protein uS12z (142 aa).

A Hydroxyproline modification is found at proline 61.

This sequence belongs to the universal ribosomal protein uS12 family.

This Arabidopsis thaliana (Mouse-ear cress) protein is Small ribosomal subunit protein uS12z (RPS23A).